The chain runs to 261 residues: Small ribosomal subunit protein eS1A (261 aa).

A compositionally biased stretch (basic residues) spans 1 to 18 (MTLGKNKRISKGGKRGKK). Residues 1 to 23 (MTLGKNKRISKGGKRGKKKTQET) are disordered.

It belongs to the eukaryotic ribosomal protein eS1 family. As to quaternary structure, component of the small ribosomal subunit. Mature ribosomes consist of a small (40S) and a large (60S) subunit. The 40S subunit contains about 33 different proteins and 1 molecule of RNA (18S). The 60S subunit contains about 49 different proteins and 3 molecules of RNA (25S, 5.8S and 5S).

The protein localises to the cytoplasm. This chain is Small ribosomal subunit protein eS1A, found in Trypanosoma cruzi (strain CL Brener).